Here is a 44-residue protein sequence, read N- to C-terminus: Cytochrome b559 subunit beta (44 aa).

The helical transmembrane segment at 19–35 threads the bilayer; that stretch reads WLAVHTLAVPTVFFVGA. Residue histidine 23 coordinates heme.

It belongs to the PsbE/PsbF family. Heterodimer of an alpha subunit and a beta subunit. PSII is composed of 1 copy each of membrane proteins PsbA, PsbB, PsbC, PsbD, PsbE, PsbF, PsbH, PsbI, PsbJ, PsbK, PsbL, PsbM, PsbT, PsbX, PsbY, PsbZ, Psb30/Ycf12, peripheral proteins PsbO, CyanoQ (PsbQ), PsbU, PsbV and a large number of cofactors. It forms dimeric complexes. Heme b serves as cofactor.

It is found in the cellular thylakoid membrane. This b-type cytochrome is tightly associated with the reaction center of photosystem II (PSII). PSII is a light-driven water:plastoquinone oxidoreductase that uses light energy to abstract electrons from H(2)O, generating O(2) and a proton gradient subsequently used for ATP formation. It consists of a core antenna complex that captures photons, and an electron transfer chain that converts photonic excitation into a charge separation. The polypeptide is Cytochrome b559 subunit beta (Crocosphaera subtropica (strain ATCC 51142 / BH68) (Cyanothece sp. (strain ATCC 51142))).